The following is a 199-amino-acid chain: Recombination protein RecR (199 aa).

A C4-type zinc finger spans residues 58–73 (CKKCFNFTSEDECEIC). The Toprim domain maps to 81–175 (KLICVVAETK…KVTRIAYGLP (95 aa)).

Belongs to the RecR family.

In terms of biological role, may play a role in DNA repair. It seems to be involved in an RecBC-independent recombinational process of DNA repair. It may act with RecF and RecO. This chain is Recombination protein RecR, found in Prochlorococcus marinus (strain MIT 9312).